The following is a 127-amino-acid chain: Large ribosomal subunit protein bL17 (127 aa).

This sequence belongs to the bacterial ribosomal protein bL17 family. In terms of assembly, part of the 50S ribosomal subunit. Contacts protein L32.

The sequence is that of Large ribosomal subunit protein bL17 from Leuconostoc mesenteroides subsp. mesenteroides (strain ATCC 8293 / DSM 20343 / BCRC 11652 / CCM 1803 / JCM 6124 / NCDO 523 / NBRC 100496 / NCIMB 8023 / NCTC 12954 / NRRL B-1118 / 37Y).